The sequence spans 464 residues: Cysteine--tRNA ligase 1 (464 aa).

Zn(2+) is bound at residue Cys28. The 'HIGH' region signature appears at 30–40 (VTIYDLCHIGH). 3 residues coordinate Zn(2+): Cys209, His234, and Glu238. Positions 266-270 (KMSKS) match the 'KMSKS' region motif. Lys269 is a binding site for ATP.

Belongs to the class-I aminoacyl-tRNA synthetase family. Monomer. Zn(2+) serves as cofactor.

It is found in the cytoplasm. The catalysed reaction is tRNA(Cys) + L-cysteine + ATP = L-cysteinyl-tRNA(Cys) + AMP + diphosphate. The sequence is that of Cysteine--tRNA ligase 1 from Photobacterium profundum (strain SS9).